Consider the following 163-residue polypeptide: HTH-type transcriptional regulator IscR (163 aa).

Residues 2-131 (RLTSKGRYAV…NNITLGELVN (130 aa)) enclose the HTH rrf2-type domain. The H-T-H motif DNA-binding region spans 28–51 (LADISERQGISLSYLEQLFSRLRK). [2Fe-2S] cluster contacts are provided by C92, C98, and C104.

The cofactor is [2Fe-2S] cluster.

Functionally, regulates the transcription of several operons and genes involved in the biogenesis of Fe-S clusters and Fe-S-containing proteins. This chain is HTH-type transcriptional regulator IscR, found in Klebsiella pneumoniae subsp. pneumoniae (strain ATCC 700721 / MGH 78578).